The chain runs to 481 residues: Thiol protease (481 aa).

The 313-residue stretch at 169-481 folds into the Calpain catalytic domain; that stretch reads DLREQALSST…ENFWYIAYMY (313 aa). Active-site residues include cysteine 229, histidine 406, and asparagine 426.

Belongs to the peptidase C2 family.

With respect to regulation, inactive below 20 degrees Celsius and pH 6.0. Inhibited by divalent cations. Its function is as follows. Thiol protease. Probably an important virulence factor. In Porphyromonas gingivalis (strain ATCC BAA-308 / W83), this protein is Thiol protease (tpr).